The sequence spans 269 residues: Small ribosomal subunit protein uS2 (269 aa).

The protein belongs to the universal ribosomal protein uS2 family.

The sequence is that of Small ribosomal subunit protein uS2 (rpsB) from Synechocystis sp. (strain ATCC 27184 / PCC 6803 / Kazusa).